Reading from the N-terminus, the 305-residue chain is Tyrosine recombinase XerC (305 aa).

The 87-residue stretch at 2 to 88 folds into the Core-binding (CB) domain; sequence TNKQRLVHLF…ALRSFYKFLL (87 aa). One can recognise a Tyr recombinase domain in the interval 109–295; the sequence is RIPSFLYEEE…SKDSLRKTYM (187 aa). Residues arginine 149, lysine 173, histidine 247, arginine 250, and histidine 273 contribute to the active site. The active-site O-(3'-phospho-DNA)-tyrosine intermediate is the tyrosine 282.

This sequence belongs to the 'phage' integrase family. XerC subfamily. In terms of assembly, forms a cyclic heterotetrameric complex composed of two molecules of XerC and two molecules of XerD.

The protein resides in the cytoplasm. Functionally, site-specific tyrosine recombinase, which acts by catalyzing the cutting and rejoining of the recombining DNA molecules. The XerC-XerD complex is essential to convert dimers of the bacterial chromosome into monomers to permit their segregation at cell division. It also contributes to the segregational stability of plasmids. This Bacillus pumilus (strain SAFR-032) protein is Tyrosine recombinase XerC.